Here is a 465-residue protein sequence, read N- to C-terminus: Phosphatidate cytidylyltransferase (465 aa).

The segment at 1–60 (MSDQPPAENADVRQRRAPESPVTERLRAPARDDARPTSDESDMEGILQDEDSDAGSKNKE) is disordered. Positions 10–38 (ADVRQRRAPESPVTERLRAPARDDARPTS) are enriched in basic and acidic residues. Positions 39–53 (DESDMEGILQDEDSD) are enriched in acidic residues. 8 consecutive transmembrane segments (helical) span residues 95–117 (WVVR…TRGA), 121–143 (MFLV…LAVY), 158–178 (FLLT…WGIV), 187–207 (FLVA…FVSF), 214–234 (GYYM…LLIV), 239–259 (FIIQ…AMII), 288–308 (GFIG…LALY), and 367–387 (IALS…ASGF).

The protein belongs to the CDS family.

It is found in the membrane. It carries out the reaction a 1,2-diacyl-sn-glycero-3-phosphate + CTP + H(+) = a CDP-1,2-diacyl-sn-glycerol + diphosphate. Its pathway is phospholipid metabolism; CDP-diacylglycerol biosynthesis; CDP-diacylglycerol from sn-glycerol 3-phosphate: step 3/3. Its function is as follows. Provides CDP-diacylglycerol, an important precursor for the synthesis of phosphatidylinositol (PtdIns). In Caenorhabditis elegans, this protein is Phosphatidate cytidylyltransferase (cdgs-1).